A 572-amino-acid polypeptide reads, in one-letter code: Dihydroxy-acid dehydratase (572 aa).

A [2Fe-2S] cluster-binding site is contributed by Cys57. Asp89 is a binding site for Mg(2+). Cys130 serves as a coordination point for [2Fe-2S] cluster. Residues Asp131 and Lys132 each coordinate Mg(2+). Lys132 carries the N6-carboxylysine modification. Position 202 (Cys202) interacts with [2Fe-2S] cluster. Glu453 is a binding site for Mg(2+). Catalysis depends on Ser479, which acts as the Proton acceptor.

The protein belongs to the IlvD/Edd family. As to quaternary structure, homodimer. The cofactor is [2Fe-2S] cluster. Mg(2+) is required as a cofactor.

It carries out the reaction (2R)-2,3-dihydroxy-3-methylbutanoate = 3-methyl-2-oxobutanoate + H2O. The enzyme catalyses (2R,3R)-2,3-dihydroxy-3-methylpentanoate = (S)-3-methyl-2-oxopentanoate + H2O. The protein operates within amino-acid biosynthesis; L-isoleucine biosynthesis; L-isoleucine from 2-oxobutanoate: step 3/4. It functions in the pathway amino-acid biosynthesis; L-valine biosynthesis; L-valine from pyruvate: step 3/4. In terms of biological role, functions in the biosynthesis of branched-chain amino acids. Catalyzes the dehydration of (2R,3R)-2,3-dihydroxy-3-methylpentanoate (2,3-dihydroxy-3-methylvalerate) into 2-oxo-3-methylpentanoate (2-oxo-3-methylvalerate) and of (2R)-2,3-dihydroxy-3-methylbutanoate (2,3-dihydroxyisovalerate) into 2-oxo-3-methylbutanoate (2-oxoisovalerate), the penultimate precursor to L-isoleucine and L-valine, respectively. The chain is Dihydroxy-acid dehydratase from Streptococcus sanguinis (strain SK36).